A 160-amino-acid chain; its full sequence is 2-C-methyl-D-erythritol 2,4-cyclodiphosphate synthase (160 aa).

Asp9 and His11 together coordinate a divalent metal cation. Residues Asp9–His11 and His35–Ser36 each bind 4-CDP-2-C-methyl-D-erythritol 2-phosphate. A divalent metal cation is bound at residue His43. 4-CDP-2-C-methyl-D-erythritol 2-phosphate is bound by residues Asp57–Gly59, Phe62–Asp66, and Phe140.

Belongs to the IspF family. In terms of assembly, homotrimer. A divalent metal cation serves as cofactor.

It carries out the reaction 4-CDP-2-C-methyl-D-erythritol 2-phosphate = 2-C-methyl-D-erythritol 2,4-cyclic diphosphate + CMP. Its pathway is isoprenoid biosynthesis; isopentenyl diphosphate biosynthesis via DXP pathway; isopentenyl diphosphate from 1-deoxy-D-xylulose 5-phosphate: step 4/6. In terms of biological role, involved in the biosynthesis of isopentenyl diphosphate (IPP) and dimethylallyl diphosphate (DMAPP), two major building blocks of isoprenoid compounds. Catalyzes the conversion of 4-diphosphocytidyl-2-C-methyl-D-erythritol 2-phosphate (CDP-ME2P) to 2-C-methyl-D-erythritol 2,4-cyclodiphosphate (ME-CPP) with a corresponding release of cytidine 5-monophosphate (CMP). This is 2-C-methyl-D-erythritol 2,4-cyclodiphosphate synthase from Fusobacterium nucleatum subsp. nucleatum (strain ATCC 25586 / DSM 15643 / BCRC 10681 / CIP 101130 / JCM 8532 / KCTC 2640 / LMG 13131 / VPI 4355).